Reading from the N-terminus, the 621-residue chain is tRNA uridine 5-carboxymethylaminomethyl modification enzyme MnmG (621 aa).

9–14 is a binding site for FAD; the sequence is GGGHAG. 270-284 is a binding site for NAD(+); sequence GPRYCPSIEDKIVKF.

It belongs to the MnmG family. In terms of assembly, homodimer. Heterotetramer of two MnmE and two MnmG subunits. FAD serves as cofactor.

The protein localises to the cytoplasm. Its function is as follows. NAD-binding protein involved in the addition of a carboxymethylaminomethyl (cmnm) group at the wobble position (U34) of certain tRNAs, forming tRNA-cmnm(5)s(2)U34. This is tRNA uridine 5-carboxymethylaminomethyl modification enzyme MnmG from Borrelia garinii subsp. bavariensis (strain ATCC BAA-2496 / DSM 23469 / PBi) (Borreliella bavariensis).